Here is a 178-residue protein sequence, read N- to C-terminus: Protein GrpE (178 aa).

Residues 1–11 (MENTQENPTDQ) show a composition bias toward polar residues. Residues 1 to 31 (MENTQENPTDQTTEETGREAQAAENAAPAAE) form a disordered region. Residues 19–31 (EAQAAENAAPAAE) show a composition bias toward low complexity.

Belongs to the GrpE family. Homodimer.

The protein localises to the cytoplasm. In terms of biological role, participates actively in the response to hyperosmotic and heat shock by preventing the aggregation of stress-denatured proteins, in association with DnaK and GrpE. It is the nucleotide exchange factor for DnaK and may function as a thermosensor. Unfolded proteins bind initially to DnaJ; upon interaction with the DnaJ-bound protein, DnaK hydrolyzes its bound ATP, resulting in the formation of a stable complex. GrpE releases ADP from DnaK; ATP binding to DnaK triggers the release of the substrate protein, thus completing the reaction cycle. Several rounds of ATP-dependent interactions between DnaJ, DnaK and GrpE are required for fully efficient folding. In Burkholderia thailandensis (strain ATCC 700388 / DSM 13276 / CCUG 48851 / CIP 106301 / E264), this protein is Protein GrpE.